The following is a 415-amino-acid chain: Beta-2 adrenergic receptor (415 aa).

Topologically, residues 1 to 34 (MGQPANRSVFLLAPNGSHAPDQGDSQERSEAWVV) are extracellular. Residues N6 and N15 are each glycosylated (N-linked (GlcNAc...) asparagine). A helical membrane pass occupies residues 35–58 (GMGIVMSLIVLAIVFGNVLVITAI). At 59 to 71 (ARFERLQTVTNYF) the chain is on the cytoplasmic side. Residues 72–95 (ITSLACADLVMGLAVVPFGASHIL) traverse the membrane as a helical segment. The Extracellular segment spans residues 96 to 106 (MKMWTFGNFWC). 2 disulfides stabilise this stretch: C106–C191 and C184–C190. Residues 107 to 129 (EFWTSIDVLCVTASIETLCVIAV) form a helical membrane-spanning segment. The Cytoplasmic portion of the chain corresponds to 130–150 (DRYFAITSPFKYQSLLTKNKA). Y141 bears the Phosphotyrosine mark. The helical transmembrane segment at 151-174 (RVVILMVWIVSGLTSFLPIQMHWY) threads the bilayer. Topologically, residues 175 to 196 (RATHQEAINCYAKETCCDFFTN) are extracellular. Residues 197 to 220 (QAYAIASSIVSFYLPLVVMVFVYS) form a helical membrane-spanning segment. At 221-274 (RVFQVAQRQLQKIDRSEGRFHAQNLSQVEQDGRSGHGHRRSSKFCLKEHKALKT) the chain is on the cytoplasmic side. S246 carries the phosphoserine modification. Residues S261 and S262 each carry the phosphoserine; by PKA modification. C265 carries S-palmitoyl cysteine lipidation. The helical transmembrane segment at 275 to 298 (LGIIMGTFTLCWLPFFIVNIVHVI) threads the bilayer. Residues 299–305 (QDNLIPK) lie on the Extracellular side of the membrane. A helical transmembrane segment spans residues 306–329 (EVYILLNWVGYVNSAFNPLIYCRS). Topologically, residues 330–415 (PDFRIAFQEL…RNCSTNDSLL (86 aa)) are cytoplasmic. Residue C341 is the site of S-palmitoyl cysteine attachment. Phosphoserine; by PKA occurs at positions 345 and 346. At S355 the chain carries Phosphoserine; by BARK. The disordered stretch occupies residues 379 to 415 (SELLCEDPPGTEDRQGTVPSDSVDSQGRNCSTNDSLL). 2 positions are modified to 4-hydroxyproline: P387 and P397. The span at 395 to 415 (TVPSDSVDSQGRNCSTNDSLL) shows a compositional bias: polar residues. Positions 412-415 (DSLL) match the PDZ-binding motif.

The protein belongs to the G-protein coupled receptor 1 family. Adrenergic receptor subfamily. ADRB2 sub-subfamily. As to quaternary structure, binds NHERF1 and GPRASP1. Interacts with ARRB1 and ARRB2. Interacts with SRC. Interacts with USP20 and USP33. Interacts with VHL; the interaction, which is increased on hydroxylation of ADRB2, ubiquitinates ADRB2 leading to its degradation. Interacts with EGLN3; the interaction hydroxylates ADRB2 facilitating VHL-E3 ligase-mediated ubiquitination. Interacts (via PDZ-binding motif) with SNX27 (via PDZ domain); the interaction is required when endocytosed to prevent degradation in lysosomes and promote recycling to the plasma membrane. Interacts with CNIH4. Interacts with ARRDC3. Interacts with NEDD4. Interacts with MARCHF2. In terms of processing, palmitoylated; may reduce accessibility of Ser-345 and Ser-346 by anchoring Cys-341 to the plasma membrane. Agonist stimulation promotes depalmitoylation and further allows Ser-345 and Ser-346 phosphorylation. Post-translationally, phosphorylated by PKA and BARK upon agonist stimulation, which mediates homologous desensitization of the receptor. PKA-mediated phosphorylation seems to facilitate phosphorylation by BARK. Phosphorylation of Tyr-141 is induced by insulin and leads to supersensitization of the receptor. In terms of processing, polyubiquitinated. Agonist-induced ubiquitination leads to sort internalized receptors to the lysosomes for degradation. Deubiquitination by USP20 and USP33, leads to ADRB2 recycling and resensitization after prolonged agonist stimulation. USP20 and USP33 are constitutively associated and are dissociated immediately after agonist stimulation. Ubiquitination by the VHL-E3 ligase complex is oxygen-dependent. Post-translationally, hydroxylation by EGLN3 occurs only under normoxia and increases the interaction with VHL and the subsequent ubiquitination and degradation of ADRB2. Palmitoylated. Mainly palmitoylated at Cys-341. Palmitoylation may reduce accessibility of phosphorylation sites by anchoring the receptor to the plasma membrane. Agonist stimulation promotes depalmitoylation and further allows Ser-345 and Ser-346 phosphorylation. Also undergoes transient, ligand-induced palmitoylation at Cys-265 probably by ZDHHC9, ZDHHC14 and ZDHHC18 within the Golgi. Palmitoylation at Cys-265 requires phosphorylation by PKA and receptor internalization and stabilizes the receptor. Could be depalmitoylated by LYPLA1 at the plasma membrane.

The protein resides in the cell membrane. It localises to the early endosome. The protein localises to the golgi apparatus. Functionally, beta-adrenergic receptors mediate the catecholamine-induced activation of adenylate cyclase through the action of G proteins. The beta-2-adrenergic receptor binds epinephrine with an approximately 30-fold greater affinity than it does norepinephrine. The polypeptide is Beta-2 adrenergic receptor (ADRB2) (Canis lupus familiaris (Dog)).